A 404-amino-acid polypeptide reads, in one-letter code: Cysteine desulfurase IscS (404 aa).

Pyridoxal 5'-phosphate-binding positions include 75-76 (AT), asparagine 155, glutamine 183, and 203-205 (SGH). N6-(pyridoxal phosphate)lysine is present on lysine 206. Residue threonine 243 coordinates pyridoxal 5'-phosphate. Cysteine 328 serves as the catalytic Cysteine persulfide intermediate. [2Fe-2S] cluster is bound at residue cysteine 328.

It belongs to the class-V pyridoxal-phosphate-dependent aminotransferase family. NifS/IscS subfamily. As to quaternary structure, homodimer. Forms a heterotetramer with IscU, interacts with other sulfur acceptors. Requires pyridoxal 5'-phosphate as cofactor.

Its subcellular location is the cytoplasm. It carries out the reaction (sulfur carrier)-H + L-cysteine = (sulfur carrier)-SH + L-alanine. It functions in the pathway cofactor biosynthesis; iron-sulfur cluster biosynthesis. Its function is as follows. Master enzyme that delivers sulfur to a number of partners involved in Fe-S cluster assembly, tRNA modification or cofactor biosynthesis. Catalyzes the removal of elemental sulfur atoms from cysteine to produce alanine. Functions as a sulfur delivery protein for Fe-S cluster synthesis onto IscU, an Fe-S scaffold assembly protein, as well as other S acceptor proteins. In Shewanella oneidensis (strain ATCC 700550 / JCM 31522 / CIP 106686 / LMG 19005 / NCIMB 14063 / MR-1), this protein is Cysteine desulfurase IscS.